The following is a 520-amino-acid chain: Ubiquitin carboxyl-terminal hydrolase 3 (520 aa).

An N-acetylmethionine modification is found at Met1. The segment at Met1 to Leu121 adopts a UBP-type zinc-finger fold. Zn(2+) is bound by residues Cys3, His5, Cys29, Cys32, Cys41, Cys44, Cys49, His56, His60, His82, Cys95, and Cys98. Positions Thr159–Arg511 constitute a USP domain. Cys168 functions as the Nucleophile in the catalytic mechanism. His471 functions as the Proton acceptor in the catalytic mechanism.

This sequence belongs to the peptidase C19 family. USP3 subfamily. In terms of assembly, interacts (via UBP-type domain) with H2A; the interaction is less efficient than with monoubiquitinated H2A.

The protein resides in the nucleus. The protein localises to the cytoplasm. The catalysed reaction is Thiol-dependent hydrolysis of ester, thioester, amide, peptide and isopeptide bonds formed by the C-terminal Gly of ubiquitin (a 76-residue protein attached to proteins as an intracellular targeting signal).. Its function is as follows. Deubiquitinase that plays a role in several cellular processes including transcriptional regulation, cell cycle progression or innate immunity. In response to DNA damage, deubiquitinates monoubiquitinated target proteins such as histone H2A and H2AX and thereby counteracts RNF168- and RNF8-mediated ubiquitination. In turn, participates in the recruitment of DNA damage repair factors to DNA break sites. Required for proper progression through S phase and subsequent mitotic entry. Acts as a positive regulator of TP53 by deubiquitinating and stabilizing it to promote normal cell proliferation and transformation. Participates in establishing tolerance innate immune memory through non-transcriptional feedback. Mechanistically, negatively regulates TLR-induced NF-kappa-B signaling by targeting and removing the 'Lys-63'-linked polyubiquitin chains on MYD88. Negatively regulates the activation of type I interferon signaling by mediating 'Lys-63'-linked polyubiquitin chains on RIGI and IFIH1. Also deubiquinates ASC/PYCARD, the central adapter mediating the assembly and activation of most inflammasomes, and thereby promotes inflammasome activation. In Mus musculus (Mouse), this protein is Ubiquitin carboxyl-terminal hydrolase 3 (Usp3).